A 594-amino-acid chain; its full sequence is Alanine--tRNA ligase (594 aa).

The Zn(2+) site is built by His456, His460, Cys558, and His562.

The protein belongs to the class-II aminoacyl-tRNA synthetase family. It depends on Zn(2+) as a cofactor.

The protein resides in the cytoplasm. The catalysed reaction is tRNA(Ala) + L-alanine + ATP = L-alanyl-tRNA(Ala) + AMP + diphosphate. Functionally, catalyzes the attachment of alanine to tRNA(Ala) in a two-step reaction: alanine is first activated by ATP to form Ala-AMP and then transferred to the acceptor end of tRNA(Ala). Also edits incorrectly charged Ser-tRNA(Ala) and Gly-tRNA(Ala) via its editing domain. The sequence is that of Alanine--tRNA ligase (alaS) from Borreliella burgdorferi (strain ATCC 35210 / DSM 4680 / CIP 102532 / B31) (Borrelia burgdorferi).